The sequence spans 767 residues: 5-methyltetrahydropteroyltriglutamate--homocysteine methyltransferase (767 aa).

5-methyltetrahydropteroyltri-L-glutamate contacts are provided by residues 17–20 and K117; that span reads RELK. Residues 441-443 and E494 contribute to the L-homocysteine site; that span reads IGS. L-methionine contacts are provided by residues 441-443 and E494; that span reads IGS. 5-methyltetrahydropteroyltri-L-glutamate is bound by residues 525 to 526 and W571; that span reads RC. D609 lines the L-homocysteine pocket. D609 is an L-methionine binding site. E615 contributes to the 5-methyltetrahydropteroyltri-L-glutamate binding site. Zn(2+) is bound by residues H652, C654, and E676. The active-site Proton donor is the H705. C737 contributes to the Zn(2+) binding site.

It belongs to the vitamin-B12 independent methionine synthase family. It depends on Zn(2+) as a cofactor.

The catalysed reaction is 5-methyltetrahydropteroyltri-L-glutamate + L-homocysteine = tetrahydropteroyltri-L-glutamate + L-methionine. The protein operates within amino-acid biosynthesis; L-methionine biosynthesis via de novo pathway; L-methionine from L-homocysteine (MetE route): step 1/1. In terms of biological role, catalyzes the transfer of a methyl group from 5-methyltetrahydrofolate to homocysteine resulting in methionine formation. This Bifidobacterium longum subsp. infantis (strain ATCC 15697 / DSM 20088 / JCM 1222 / NCTC 11817 / S12) protein is 5-methyltetrahydropteroyltriglutamate--homocysteine methyltransferase.